The primary structure comprises 172 residues: Small ribosomal subunit protein uS5 (172 aa).

An S5 DRBM domain is found at 17 to 80; that stretch reads MREKMIAVNR…EECRRNLVKV (64 aa).

Belongs to the universal ribosomal protein uS5 family. Part of the 30S ribosomal subunit. Contacts proteins S4 and S8.

Its function is as follows. With S4 and S12 plays an important role in translational accuracy. Located at the back of the 30S subunit body where it stabilizes the conformation of the head with respect to the body. The sequence is that of Small ribosomal subunit protein uS5 from Paracidovorax citrulli (strain AAC00-1) (Acidovorax citrulli).